The sequence spans 554 residues: MPTININKVDLERLSNISLSDKMIEDRFPMMGVEVEEIFEEVDKNGKKQNMVQFSINPDRPDYLSVEGLARGFRGFMGINTGIQEFEVLNSNIKVTVEENKTRPYVAFALVKNVLMDELVLESMINLQEKLHWAIGRDRKKLAIGIHDFDKVKAPFTYKEIRGDEIKFVPLGYEDEEMTPREIIEKHEKGIKYAHLIQDDKFPVIVDLNGEVLSMPPIINGTLTKVTPTSKNLLIDITGTEKEAVEETLNIIVCALAERRGTIVSVDVNGKKYPDLTPKSRMISVESINKKLGLNLNPGEIIQAVKKSGMDALYEDGNLIVKIPAYRNDILHNVDLKEEIAINYGYEKFEGKLPSVATTGSKDSVEKKCSAMSDLMIGLGFYEVMNLTLSNQDTLFEKMNLEVEEKDYIEVLKPASIEHRVLRTSILPLLLETLYINKHHSLPQKIFEIGDCVIIDENDTETDTKCKNIKKIAGAITHPLTNFNEIKSSTGALLREFFEDFEFENYEHPAFIPGRCAKIIKDRKEVGFFGEIHPEVILNFELEHPIVGFEITIE.

Positions 276–351 constitute a B5 domain; sequence LTPKSRMISV…INYGYEKFEG (76 aa). 4 residues coordinate Mg(2+): Asp329, Asp335, Glu338, and Glu339.

This sequence belongs to the phenylalanyl-tRNA synthetase beta subunit family. Type 2 subfamily. Tetramer of two alpha and two beta subunits. Requires Mg(2+) as cofactor.

The protein resides in the cytoplasm. It carries out the reaction tRNA(Phe) + L-phenylalanine + ATP = L-phenylalanyl-tRNA(Phe) + AMP + diphosphate + H(+). In Methanococcus maripaludis (strain C6 / ATCC BAA-1332), this protein is Phenylalanine--tRNA ligase beta subunit.